We begin with the raw amino-acid sequence, 928 residues long: cGMP-dependent 3',5'-cyclic phosphodiesterase (928 aa).

Position 109 is a phosphoserine (Ser109). The tract at residues 188-210 (RRPEAVQNTSADPSEDQKDEKGY) is disordered. GAF domains lie at 228-365 (DATS…GTVL) and 397-536 (DVSV…GISI). 5 residues coordinate 3',5'-cyclic GMP: Ser419, Asp434, Ile453, Tyr476, and Thr487. A PDEase domain is found at 566 to 890 (SDDEYTKLLH…EHWTKVSHKF (325 aa)). The active-site Proton donor is His644. Zn(2+) contacts are provided by His648, His684, Asp685, and Asp796. Asp685 lines the Mg(2+) pocket.

Belongs to the cyclic nucleotide phosphodiesterase family. PDE2 subfamily. As to quaternary structure, homodimer. Zn(2+) serves as cofactor. Requires Mg(2+) as cofactor. As to expression, expressed in brain and liver.

The protein localises to the cell membrane. It is found in the cytoplasm. It localises to the mitochondrion matrix. The protein resides in the mitochondrion inner membrane. Its subcellular location is the mitochondrion outer membrane. The catalysed reaction is a nucleoside 3',5'-cyclic phosphate + H2O = a nucleoside 5'-phosphate + H(+). The enzyme catalyses 3',5'-cyclic GMP + H2O = GMP + H(+). It catalyses the reaction 3',5'-cyclic AMP + H2O = AMP + H(+). The 3',5'-cyclic-AMP phosphodiesterase activity is stimulated by 3',5'-cyclic GMP. Specifically inhibited by Bay 60-7550. When repressed, protected from ionomycin- but not staurosporin-induced cell death. Functionally, cGMP-activated cyclic nucleotide phosphodiesterase with a dual-specificity for the second messengers cAMP and cGMP, which are key regulators of many important physiological processes. Has a higher efficiency with cGMP compared to cAMP. Plays a role in cell growth and migration. Its function is as follows. Regulates mitochondrial cAMP levels and respiration. Involved in the regulation of mitochondria morphology/dynamics and apoptotic cell death via local modulation of cAMP/PKA signaling in the mitochondrion, including the monitoring of local cAMP levels at the outer mitochondrial membrane and of PKA-dependent phosphorylation of Dnm1l. In Rattus norvegicus (Rat), this protein is cGMP-dependent 3',5'-cyclic phosphodiesterase.